A 251-amino-acid polypeptide reads, in one-letter code: Tritrans,polycis-undecaprenyl-diphosphate synthase (geranylgeranyl-diphosphate specific) (251 aa).

The active site involves Asp-29. Asp-29 provides a ligand contact to Mg(2+). Substrate-binding positions include Gly-30–Arg-33, Phe-34, His-46, and Ser-74–Glu-76. Asn-77 acts as the Proton acceptor in catalysis. Substrate is bound by residues Phe-78, Arg-80, Arg-200, and Arg-206 to Ser-208.

Belongs to the UPP synthase family. In terms of assembly, homodimer. It depends on Mg(2+) as a cofactor.

It carries out the reaction geranylgeranyl diphosphate + 7 isopentenyl diphosphate = tri-trans,hepta-cis-undecaprenyl diphosphate + 7 diphosphate. Its function is as follows. Catalyzes the sequential condensation of isopentenyl diphosphate (IPP) with geranylgeranyl diphosphate (GGPP) to yield (2Z,6Z,10Z,14Z,18Z,22Z,26Z,30E,34E,38E)-undecaprenyl diphosphate (tritrans,heptacis-UPP). It is probably the precursor of glycosyl carrier lipids. This chain is Tritrans,polycis-undecaprenyl-diphosphate synthase (geranylgeranyl-diphosphate specific), found in Archaeoglobus fulgidus (strain ATCC 49558 / DSM 4304 / JCM 9628 / NBRC 100126 / VC-16).